Here is a 317-residue protein sequence, read N- to C-terminus: Melanocyte-stimulating hormone receptor (317 aa).

Residues 1 to 37 (MPVQGSQRRLLGSLNSTPTATPHLGLAANQTGARCLE) are Extracellular-facing. Asn29 carries N-linked (GlcNAc...) asparagine glycosylation. Residues 38 to 63 (VSIPDGLFLSLGLVSLVENVLVVTAI) traverse the membrane as a helical segment. Topologically, residues 64–72 (AKNRNLHSP) are cytoplasmic. Residues 73 to 93 (MYCFICCLALSDLLVSGSNML) form a helical membrane-spanning segment. Residues 94 to 118 (ETAVILLLEAGALAARAAVVQQLDN) lie on the Extracellular side of the membrane. The chain crosses the membrane as a helical span at residues 119–140 (VIDVITCSSMLSSLCFLGAIAV). The Cytoplasmic segment spans residues 141-163 (DRYISIFYALRYHSIVTLPRARR). Residues 164–183 (AVAAIWVASVLFSMLFIAYY) traverse the membrane as a helical segment. Over 184–191 (DHAAVLLC) the chain is Extracellular. A helical membrane pass occupies residues 192–211 (LVVFFLAMLVLMAVLYVHML). Over 212–240 (ARACQHAQGIARLHKRQCPAHQGFGLKGA) the chain is Cytoplasmic. Residues 241-266 (ATLTILLGIFFLCWGPFFLHLTLIVL) form a helical membrane-spanning segment. Over 267-279 (CPQHPTCSCIFKN) the chain is Extracellular. Residues 280-300 (FNLFLALIICNAIIDPLIYAF) traverse the membrane as a helical segment. Over 301-317 (RSQELRRTLKEVLLCSW) the chain is Cytoplasmic. Residue Cys315 is the site of S-palmitoyl cysteine attachment.

Belongs to the G-protein coupled receptor 1 family. In terms of assembly, interacts with MGRN1, but does not undergo MGRN1-mediated ubiquitination; this interaction competes with GNAS-binding and thus inhibits agonist-induced cAMP production. Interacts with OPN3; the interaction results in a decrease in MC1R-mediated cAMP signaling and ultimately a decrease in melanin production in melanocytes.

The protein resides in the cell membrane. Receptor for MSH (alpha, beta and gamma) and ACTH. The activity of this receptor is mediated by G proteins which activate adenylate cyclase. Mediates melanogenesis, the production of eumelanin (black/brown) and phaeomelanin (red/yellow), via regulation of cAMP signaling in melanocytes. The sequence is that of Melanocyte-stimulating hormone receptor (MC1R) from Chlorocebus aethiops (Green monkey).